The following is a 233-amino-acid chain: V-type proton ATPase subunit E (233 aa).

This sequence belongs to the V-ATPase E subunit family. V-ATPase is a heteromultimeric enzyme composed of a peripheral catalytic V1 complex (components A to H) attached to an integral membrane V0 proton pore complex (components: a, c, c', c'' and d).

Subunit of the peripheral V1 complex of vacuolar ATPase essential for assembly or catalytic function. V-ATPase is responsible for acidifying a variety of intracellular compartments in eukaryotic cells. The protein is V-type proton ATPase subunit E (vatE) of Dictyostelium discoideum (Social amoeba).